The primary structure comprises 380 residues: MADKAFHTRLINMRRDLHEHPELSFQEVETTKKIRRWLEEEQIEILDVPQLKTGVIAEIKGREDGPVIAIRADIDALPIQEQTNLPFASKVDGTMHACGHDFHTASIIGTAMLLNQRRAELKGTVRFIFQPAEEIAAGARKVLEAGVLNGVSAIFGMHNKPDLPVGTIGVKEGPLMASVDRFEIVIKGKGGHAGIPNNSIDPIAAAGQIISGLQSVVSRNISSLQNAVVSITRVQAGTSWNVIPDQAEMEGTVRTFQKEARQAVPEHMRRVAEGIAAGYGAQAEFKWFPYLPSVQNDGTFLNAASEAAARLGYQTVHAEQSPGGEDFALYQEKIPGFFVWMGTNGTEEWHHPAFTLDEEALTVASQYFAELAVIVLETIK.

Ni(2+)-binding residues include Cys-98, His-100, Glu-134, His-158, and His-350.

This sequence belongs to the peptidase M20 family. A divalent metal cation is required as a cofactor.

It catalyses the reaction N-acetyl-L-cysteine + H2O = L-cysteine + acetate. The protein operates within amino-acid biosynthesis; L-cysteine biosynthesis. Probably catalyzes the deacetylation of N-acetylcysteine (NAC) to acetate and cysteine. Is involved in a S-(2-succino)cysteine (2SC) degradation pathway that allows B.subtilis to grow on 2SC as a sole sulfur source, via its metabolization to cysteine. This Bacillus subtilis (strain 168) protein is N-acetylcysteine deacetylase.